Consider the following 117-residue polypeptide: 3',5'-cyclic-AMP phosphodiesterase 4A (117 aa).

Residues 42–79 form a disordered region; it reads KQNEVEIPSPTMKDREPQEAPRQRPCQQLPPPVPHLQP. A compositionally biased stretch (basic and acidic residues) spans 53-63; it reads MKDREPQEAPR. The tract at residues 78–117 is catalytic; that stretch reads QPMSQITGVKRLSHNSGLNNASIPRFGVKTDQEELLAQEL.

It belongs to the cyclic nucleotide phosphodiesterase family. PDE4 subfamily. As to quaternary structure, interacts with LYN (via SH3 domain). Interacts with ARRB2. Requires Zn(2+) as cofactor. Mg(2+) serves as cofactor. Mn(2+) is required as a cofactor. Proteolytically cleaved by CASP3.

It localises to the cytoplasm. The protein resides in the cytosol. The protein localises to the membrane. It carries out the reaction 3',5'-cyclic AMP + H2O = AMP + H(+). The protein operates within purine metabolism; 3',5'-cyclic AMP degradation; AMP from 3',5'-cyclic AMP: step 1/1. In terms of biological role, hydrolyzes the second messenger 3',5'-cyclic AMP (cAMP), which is a key regulator of many important physiological processes. In Cavia porcellus (Guinea pig), this protein is 3',5'-cyclic-AMP phosphodiesterase 4A (PDE4A).